A 366-amino-acid polypeptide reads, in one-letter code: Aminomethyltransferase (366 aa).

It belongs to the GcvT family. The glycine cleavage system is composed of four proteins: P, T, L and H.

It carries out the reaction N(6)-[(R)-S(8)-aminomethyldihydrolipoyl]-L-lysyl-[protein] + (6S)-5,6,7,8-tetrahydrofolate = N(6)-[(R)-dihydrolipoyl]-L-lysyl-[protein] + (6R)-5,10-methylene-5,6,7,8-tetrahydrofolate + NH4(+). The glycine cleavage system catalyzes the degradation of glycine. The polypeptide is Aminomethyltransferase (Thermosynechococcus vestitus (strain NIES-2133 / IAM M-273 / BP-1)).